A 42-amino-acid chain; its full sequence is uncharacterized protein (42 aa).

Residues 15 to 35 (INVCLSFFFLFYFIFVLFFAA) traverse the membrane as a helical segment.

The protein localises to the membrane. This is an uncharacterized protein from Dictyostelium discoideum (Social amoeba).